Consider the following 137-residue polypeptide: uncharacterized protein (137 aa).

The next 2 membrane-spanning stretches (helical) occupy residues 26–42 and 52–69; these read CSLCILSMAISTSFFAM and ASIPIYPLSLTFLCGSIL.

The protein localises to the membrane. This is an uncharacterized protein from Saccharomyces cerevisiae (strain ATCC 204508 / S288c) (Baker's yeast).